Consider the following 409-residue polypeptide: Growth-regulating factor 8 (409 aa).

2 stretches are compositionally biased toward gly residues: residues 1–10 (MLSSCGGHGH) and 27–36 (QQGGGGGGGQ). The interval 1–81 (MLSSCGGHGH…GGGGQMLSFS (81 aa)) is disordered. Over residues 56-68 (SSSSFLGSTSSSC) the composition is skewed to low complexity. Residues 107–142 (PFTPTQWMELEHQALIYKHIAANVSVPSSLLLPIRR) form the QLQ domain. The region spanning 158-202 (DVEPRRCRRTDGKKWRCSRDAVGDQKYCERHINRGRHRSRKHVEG) is the WRC domain. Short sequence motifs (bipartite nuclear localization signal) lie at residues 163–173 (RCRRTDGKKWR) and 191–198 (RGRHRSRK). A disordered region spans residues 221–242 (SSRGHTVARQKQVKGSAATVSD).

This sequence belongs to the GRF family.

It is found in the nucleus. Its function is as follows. Transcription activator that plays a regulatory role in gibberellin-induced stem elongation. The protein is Growth-regulating factor 8 (GRF8) of Oryza sativa subsp. japonica (Rice).